Consider the following 114-residue polypeptide: ATP synthase subunit c (114 aa).

Transmembrane regions (helical) follow at residues 31-51 (AVFY…AAGG) and 88-108 (IETF…TGIF).

The protein belongs to the ATPase C chain family. F-type ATPases have 2 components, F(1) - the catalytic core - and F(0) - the membrane proton channel. F(1) has five subunits: alpha(3), beta(3), gamma(1), delta(1), epsilon(1). F(0) has three main subunits: a(1), b(2) and c(10-14). The alpha and beta chains form an alternating ring which encloses part of the gamma chain. F(1) is attached to F(0) by a central stalk formed by the gamma and epsilon chains, while a peripheral stalk is formed by the delta and b chains.

Its subcellular location is the cell inner membrane. In terms of biological role, f(1)F(0) ATP synthase produces ATP from ADP in the presence of a proton or sodium gradient. F-type ATPases consist of two structural domains, F(1) containing the extramembraneous catalytic core and F(0) containing the membrane proton channel, linked together by a central stalk and a peripheral stalk. During catalysis, ATP synthesis in the catalytic domain of F(1) is coupled via a rotary mechanism of the central stalk subunits to proton translocation. Key component of the F(0) channel; it plays a direct role in translocation across the membrane. A homomeric c-ring of between 10-14 subunits forms the central stalk rotor element with the F(1) delta and epsilon subunits. This chain is ATP synthase subunit c, found in Sulfurihydrogenibium sp. (strain YO3AOP1).